Here is a 202-residue protein sequence, read N- to C-terminus: GTP-binding protein rho1 (202 aa).

Residue 13-20 (GDGACGKT) coordinates GTP. Residues 35 to 43 (YVPTVFENY) carry the Effector region motif. Residues 60 to 64 (DTAGQ) and 118 to 121 (CKAD) contribute to the GTP site. At C199 the chain carries Cysteine methyl ester. A lipid anchor (S-geranylgeranyl cysteine) is attached at C199. Positions 200 to 202 (ILL) are cleaved as a propeptide — removed in mature form.

Belongs to the small GTPase superfamily. Rho family.

The protein localises to the cell membrane. Functionally, involved in the regulation of cell wall growth and actin cytoskeleton organization. Activates (1,3)-beta-D-glucan synthase. The sequence is that of GTP-binding protein rho1 (rho1) from Schizosaccharomyces pombe (strain 972 / ATCC 24843) (Fission yeast).